Reading from the N-terminus, the 486-residue chain is Palmitoyltransferase pfa4 (486 aa).

The Cytoplasmic portion of the chain corresponds to 1-15; sequence MTNLQTGPTTRGLQR. A helical transmembrane segment spans residues 16 to 36; the sequence is FAIPAVCGLIIFLGYYSQYLF. Over 37–51 the chain is Lumenal; the sequence is NTSADLAPGPLTCRE. A helical transmembrane segment spans residues 52 to 72; the sequence is SLIFNILLVCLWLTYYQACTV. Over 73-146 the chain is Cytoplasmic; it reads DPGQYKFPPK…NCVSLQTFPH (74 aa). Residues 81 to 91 are compositionally biased toward basic and acidic residues; that stretch reads PKEKEDGDNNN. The disordered stretch occupies residues 81-101; the sequence is PKEKEDGDNNNKRGGRGPQKA. Residues 102-152 form the DHHC domain; sequence KWCKKCDAPKPPRAHHCRHCARCIPRMDHHCPWTGNCVSLQTFPHFLRFLV. Cys132 serves as the catalytic S-palmitoyl cysteine intermediate. Residues 147 to 166 form a helical membrane-spanning segment; the sequence is FLRFLVYTNAALVYFARLLW. Topologically, residues 167–178 are lumenal; the sequence is TRLYYGLWDQRH. Residues 179–201 form a helical membrane-spanning segment; it reads VPAYLGPSVGALLGCTMLSIAWF. Residues 202–486 are Cytoplasmic-facing; it reads ATQFALMVLL…RKVKSNGVHE (285 aa). Residues 314 to 420 are disordered; that stretch reads NDRVGMWPPP…QDGRAWMNSE (107 aa). 2 stretches are compositionally biased toward basic and acidic residues: residues 324-333 and 346-376; these read DPEKLRRERA and LNTE…DLRR. The span at 386-399 shows a compositional bias: acidic residues; that stretch reads EEDEIMAELEEDEG.

The protein belongs to the DHHC palmitoyltransferase family. PFA4 subfamily.

The protein resides in the endoplasmic reticulum membrane. The catalysed reaction is L-cysteinyl-[protein] + hexadecanoyl-CoA = S-hexadecanoyl-L-cysteinyl-[protein] + CoA. Mediates the reversible addition of palmitate to target proteins, thereby regulating their membrane association and biological function. This Neurospora crassa (strain ATCC 24698 / 74-OR23-1A / CBS 708.71 / DSM 1257 / FGSC 987) protein is Palmitoyltransferase pfa4.